Reading from the N-terminus, the 535-residue chain is T-complex protein 1 subunit beta (535 aa).

A2 carries the post-translational modification N-acetylalanine. Residue S3 is modified to Phosphoserine. K13 is modified (N6-acetyllysine). G44 provides a ligand contact to ADP. G44 is an ATP binding site. D97 provides a ligand contact to Mg(2+). ADP is bound by residues G98, T99, T100, S101, S168, and S169. G98, T99, and T100 together coordinate ATP. At K181 the chain carries N6-acetyllysine. K248 is covalently cross-linked (Glycyl lysine isopeptide (Lys-Gly) (interchain with G-Cter in SUMO2)). Residue S260 is modified to Phosphoserine. T261 bears the Phosphothreonine mark. ADP is bound by residues G410, E495, and K500. The ATP site is built by E495 and K500.

This sequence belongs to the TCP-1 chaperonin family. Component of the chaperonin-containing T-complex (TRiC), a hexadecamer composed of two identical back-to-back stacked rings enclosing a protein folding chamber. Each ring is made up of eight different subunits: TCP1/CCT1, CCT2, CCT3, CCT4, CCT5, CCT6A/CCT6, CCT7, CCT8. Interacts with PACRG. Interacts with FLCN. Interacts with DLEC1. Interacts with SVEP1. In terms of processing, the N-terminus is blocked.

Its subcellular location is the cytoplasm. The enzyme catalyses ATP + H2O = ADP + phosphate + H(+). Component of the chaperonin-containing T-complex (TRiC), a molecular chaperone complex that assists the folding of actin, tubulin and other proteins upon ATP hydrolysis. The TRiC complex mediates the folding of WRAP53/TCAB1, thereby regulating telomere maintenance. As part of the TRiC complex may play a role in the assembly of BBSome, a complex involved in ciliogenesis regulating transports vesicles to the cilia. This Mus musculus (Mouse) protein is T-complex protein 1 subunit beta (Cct2).